The sequence spans 196 residues: Putative 3-methyladenine DNA glycosylase (196 aa).

It belongs to the DNA glycosylase MPG family.

This is Putative 3-methyladenine DNA glycosylase from Bacillus velezensis (strain DSM 23117 / BGSC 10A6 / LMG 26770 / FZB42) (Bacillus amyloliquefaciens subsp. plantarum).